The sequence spans 414 residues: Tyrosine--tRNA ligase (414 aa).

Position 38 (tyrosine 38) interacts with L-tyrosine. The short motif at 43–52 (PTATSLHLGN) is the 'HIGH' region element. 2 residues coordinate L-tyrosine: tyrosine 165 and glutamine 169. The 'KMSKS' region signature appears at 228–232 (KFGKS). Lysine 231 lines the ATP pocket. One can recognise an S4 RNA-binding domain in the interval 349–414 (FNANQIIDLG…KKYFFIIELI (66 aa)).

Belongs to the class-I aminoacyl-tRNA synthetase family. TyrS type 1 subfamily. Homodimer.

It is found in the cytoplasm. It catalyses the reaction tRNA(Tyr) + L-tyrosine + ATP = L-tyrosyl-tRNA(Tyr) + AMP + diphosphate + H(+). Its function is as follows. Catalyzes the attachment of tyrosine to tRNA(Tyr) in a two-step reaction: tyrosine is first activated by ATP to form Tyr-AMP and then transferred to the acceptor end of tRNA(Tyr). The chain is Tyrosine--tRNA ligase from Mesomycoplasma hyopneumoniae (strain 232) (Mycoplasma hyopneumoniae).